Consider the following 852-residue polypeptide: Disks large homolog 2 (852 aa).

2 S-palmitoyl cysteine lipidation sites follow: cysteine 5 and cysteine 7. The residue at position 28 (serine 28) is a Phosphoserine. Tyrosine 58 carries the post-translational modification Phosphotyrosine. A Phosphoserine modification is found at serine 65. PDZ domains follow at residues 98-184 (EITL…VRRR) and 193-279 (EIKL…VGKP). Phosphoserine occurs at positions 307, 328, 360, 365, 406, and 414. Positions 421–501 (KVVLHKGSTG…QTVTIIAQYQ (81 aa)) constitute a PDZ 3 domain. Tyrosine 505 carries the phosphotyrosine modification. Serine 528, serine 530, and serine 553 each carry phosphoserine. An SH3 domain is found at 536–606 (KRSLYVRAMF…PSKRRVERKE (71 aa)). Residues 662–837 (TRPVIILGPM…IYNQCKLVIE (176 aa)) enclose the Guanylate kinase-like domain. Phosphotyrosine occurs at positions 732 and 737.

The protein belongs to the MAGUK family. As to quaternary structure, interacts through its PDZ domains with NETO1. Interacts with NOS1/nNOS through second PDZ domain. Interacts with KCNJ2/Kir2.1 (via C-terminus) through one of its PDZ domains. Interacts with KCNJ4. Interacts with FRMPD4 (via C-terminus). Interacts with LRFN1. Interacts with LRFN2 and LRFN4. Interacts with FASLG. Interacts with ADAM22. Interacts with DGKI (via PDZ-binding motif). Post-translationally, palmitoylation of isoform 1 and isoform 2 is not required for targeting to postsynaptic density. In terms of tissue distribution, detected in juxtaparanodal zones in the central nervous system and at nerve terminal plexuses of basket cells in the cerebellum (at protein level). Brain. High levels in cerebellar Purkinje cells. Expressed in pyramidal cells of the Ammons's horn and granular cells of the dentate gyrus in the hippocampus as well as cerebral cortex and striatum. High levels in dorsal horn of spinal cord.

It localises to the cell membrane. It is found in the postsynaptic density. The protein localises to the synapse. Its subcellular location is the cell projection. The protein resides in the axon. It localises to the membrane. It is found in the perikaryon. Functionally, required for perception of chronic pain through NMDA receptor signaling. Regulates surface expression of NMDA receptors in dorsal horn neurons of the spinal cord. Interacts with the cytoplasmic tail of NMDA receptor subunits as well as inward rectifying potassium channels. Involved in regulation of synaptic stability at cholinergic synapses. Part of the postsynaptic protein scaffold of excitatory synapses. The protein is Disks large homolog 2 (Dlg2) of Rattus norvegicus (Rat).